The following is a 639-amino-acid chain: Elongation factor 4 (639 aa).

Residues 39–220 enclose the tr-type G domain; that stretch reads AQIRNFCIIA…EVVRLVPPPT (182 aa). Residues 51–56 and 167–170 each bind GTP; these read DHGKST and NKID.

Belongs to the TRAFAC class translation factor GTPase superfamily. Classic translation factor GTPase family. LepA subfamily.

The protein localises to the cell membrane. It catalyses the reaction GTP + H2O = GDP + phosphate + H(+). Functionally, required for accurate and efficient protein synthesis under certain stress conditions. May act as a fidelity factor of the translation reaction, by catalyzing a one-codon backward translocation of tRNAs on improperly translocated ribosomes. Back-translocation proceeds from a post-translocation (POST) complex to a pre-translocation (PRE) complex, thus giving elongation factor G a second chance to translocate the tRNAs correctly. Binds to ribosomes in a GTP-dependent manner. This Mycobacterium sp. (strain JLS) protein is Elongation factor 4.